The chain runs to 72 residues: Alpha-elapitoxin-Ast2b (72 aa).

Intrachain disulfides connect Cys-3-Cys-20, Cys-13-Cys-41, Cys-26-Cys-30, Cys-45-Cys-56, and Cys-57-Cys-62. Arginine amide is present on Arg-72.

This sequence belongs to the three-finger toxin family. Long-chain subfamily. Type II alpha-neurotoxin sub-subfamily. In terms of tissue distribution, expressed by the venom gland.

Its subcellular location is the secreted. In terms of biological role, binds with high affinity to muscular (alpha-1/CHRNA1) and neuronal (alpha-7/CHRNA7) nicotinic acetylcholine receptor (nAChR) and inhibits acetylcholine from binding to the receptor, thereby impairing neuromuscular and neuronal transmission. This is Alpha-elapitoxin-Ast2b from Hydrophis stokesii (Stokes's sea snake).